A 157-amino-acid chain; its full sequence is Crossover junction endodeoxyribonuclease RuvC (157 aa).

Catalysis depends on residues aspartate 7, glutamate 66, and aspartate 139. Mg(2+) contacts are provided by aspartate 7, glutamate 66, and aspartate 139.

Belongs to the RuvC family. Homodimer which binds Holliday junction (HJ) DNA. The HJ becomes 2-fold symmetrical on binding to RuvC with unstacked arms; it has a different conformation from HJ DNA in complex with RuvA. In the full resolvosome a probable DNA-RuvA(4)-RuvB(12)-RuvC(2) complex forms which resolves the HJ. Mg(2+) is required as a cofactor.

Its subcellular location is the cytoplasm. The enzyme catalyses Endonucleolytic cleavage at a junction such as a reciprocal single-stranded crossover between two homologous DNA duplexes (Holliday junction).. The RuvA-RuvB-RuvC complex processes Holliday junction (HJ) DNA during genetic recombination and DNA repair. Endonuclease that resolves HJ intermediates. Cleaves cruciform DNA by making single-stranded nicks across the HJ at symmetrical positions within the homologous arms, yielding a 5'-phosphate and a 3'-hydroxyl group; requires a central core of homology in the junction. The consensus cleavage sequence is 5'-(A/T)TT(C/G)-3'. Cleavage occurs on the 3'-side of the TT dinucleotide at the point of strand exchange. HJ branch migration catalyzed by RuvA-RuvB allows RuvC to scan DNA until it finds its consensus sequence, where it cleaves and resolves the cruciform DNA. This Helicobacter acinonychis (strain Sheeba) protein is Crossover junction endodeoxyribonuclease RuvC.